The chain runs to 210 residues: uncharacterized protein (210 aa).

The protein to E.coli YkgK.

This is an uncharacterized protein from Escherichia coli (strain K12).